The primary structure comprises 356 residues: D-alanine--D-alanine ligase (356 aa).

One can recognise an ATP-grasp domain in the interval 146–350; sequence KKLLVAEGLP…YAELLDTLIQ (205 aa). 173-228 provides a ligand contact to ATP; that stretch reads KERLGLPVFVKPARGGSSIGVSKVSAWEDLEAALTLAYESDDKVLIEPEISGAEVE. The Mg(2+) site is built by D305, E317, and N319.

The protein belongs to the D-alanine--D-alanine ligase family. Requires Mg(2+) as cofactor. Mn(2+) is required as a cofactor.

It is found in the cytoplasm. It carries out the reaction 2 D-alanine + ATP = D-alanyl-D-alanine + ADP + phosphate + H(+). It functions in the pathway cell wall biogenesis; peptidoglycan biosynthesis. Cell wall formation. This Corynebacterium aurimucosum (strain ATCC 700975 / DSM 44827 / CIP 107346 / CN-1) (Corynebacterium nigricans) protein is D-alanine--D-alanine ligase.